The chain runs to 178 residues: Gamma-crystallin S (178 aa).

Position 2 is an N-acetylserine (serine 2). The interval serine 2–glycine 5 is N-terminal arm. Beta/gamma crystallin 'Greek key' domains lie at glycine 6–glycine 44 and glycine 45–histidine 87. The tract at residues leucine 88 to glutamine 93 is connecting peptide. Beta/gamma crystallin 'Greek key' domains follow at residues alanine 94–glutamate 134 and glycine 135–valine 177.

It belongs to the beta/gamma-crystallin family. In terms of assembly, monomer.

In terms of biological role, crystallins are the dominant structural components of the vertebrate eye lens. This Mus musculus (Mouse) protein is Gamma-crystallin S (Crygs).